A 97-amino-acid chain; its full sequence is Co-chaperonin GroES (97 aa).

Belongs to the GroES chaperonin family. In terms of assembly, heptamer of 7 subunits arranged in a ring. Interacts with the chaperonin GroEL.

The protein localises to the cytoplasm. Together with the chaperonin GroEL, plays an essential role in assisting protein folding. The GroEL-GroES system forms a nano-cage that allows encapsulation of the non-native substrate proteins and provides a physical environment optimized to promote and accelerate protein folding. GroES binds to the apical surface of the GroEL ring, thereby capping the opening of the GroEL channel. This is Co-chaperonin GroES from Buchnera aphidicola subsp. Pemphigus spyrothecae.